The sequence spans 80 residues: Conotoxin Cl10.1 (80 aa).

The signal sequence occupies residues 1-20 (MTTLGMTMLVLLLLLPLATC). Residues 21–36 (LGDGERSPWDSLLRAL) constitute a propeptide that is removed on maturation.

In terms of processing, contains 4 disulfide bonds. Expressed by the venom duct.

The protein localises to the secreted. This Californiconus californicus (California cone) protein is Conotoxin Cl10.1.